The following is a 300-amino-acid chain: uncharacterized protein (300 aa).

Residues 1-19 (MATKRAHPEDETHESKRAA) are compositionally biased toward basic and acidic residues. Residues 1 to 20 (MATKRAHPEDETHESKRAAQ) form a disordered region.

This is an uncharacterized protein from Orgyia pseudotsugata multicapsid polyhedrosis virus (OpMNPV).